The sequence spans 169 residues: MTERQVECVLIEIPQGSRNKYEYDKERKVIRFDRMLFSSIVYPCDYGFFPDTLALDGDPLDAMVLMWEPTFPGCVIDVHPVAMLDMEDDKGRDEKILCVPQRDPLWNYIKTIEQVPPHLLKEITHFFETYKNLERKDVVVYGWRDLETARKVIQEAKDRYTEQKKLSNQ.

Residues Lys-20, Arg-34, and Tyr-46 each coordinate substrate. Residues Asp-56, Asp-61, and Asp-93 each coordinate Mg(2+). Substrate is bound at residue Tyr-130.

The protein belongs to the PPase family. As to quaternary structure, homohexamer. Requires Mg(2+) as cofactor.

The protein resides in the cytoplasm. The enzyme catalyses diphosphate + H2O = 2 phosphate + H(+). Its function is as follows. Catalyzes the hydrolysis of inorganic pyrophosphate (PPi) forming two phosphate ions. The sequence is that of Inorganic pyrophosphatase from Methanosarcina mazei (strain ATCC BAA-159 / DSM 3647 / Goe1 / Go1 / JCM 11833 / OCM 88) (Methanosarcina frisia).